Here is a 1883-residue protein sequence, read N- to C-terminus: DDB1- and CUL4-associated factor homolog 1 (1883 aa).

Disordered stretches follow at residues 1-47 (MDGQ…QSVE) and 309-340 (KPGDDNSVRDDPSRHRLNRSKSRGRGRVHEGA). Acidic residues predominate over residues 37 to 47 (NPEEGEEQSVE). Residues 309–322 (KPGDDNSVRDDPSR) are compositionally biased toward basic and acidic residues. A compositionally biased stretch (basic residues) spans 323–334 (HRLNRSKSRGRG). Ser349 is subject to Phosphoserine. Positions 882-924 (NKPPLAQNHQPVPGQATTRPSTDVAVGTQSTGNAPQTPVAPAS) are disordered. Over residues 888–917 (QNHQPVPGQATTRPSTDVAVGTQSTGNAPQ) the composition is skewed to polar residues. The 33-residue stretch at 1087–1119 (DSKELLLLIHEHLQASGLGDTASALLKEAQLTP) folds into the LisH domain. Disordered regions lie at residues 1157-1202 (TSKP…QWPS), 1214-1260 (PKIN…ALPQ), and 1310-1377 (SELR…NPER). The segment covering 1238-1251 (LTFSPSFSSQSRKQ) has biased composition (low complexity). Over residues 1310 to 1329 (SELRDSSVPGKRIDLGERRN) the composition is skewed to basic and acidic residues. The segment covering 1330–1362 (STFADGSGLQTPASALDANQSGSSRLGQMTPAS) has biased composition (polar residues). WD repeat units follow at residues 1464–1503 (DETALFTCIALLGGTNHIAVGSHAGEIKIFEASSGSMLES), 1506–1546 (GHQA…GGPR), 1548–1586 (SFDGCKAAKFSNSGLQFAALSCEASRKDVLLYDVQTCSP), 1587–1626 (CQKLTDTVTSSRSNPYSLVHFSPCDTLILWNGVLWDRRIP), and 1633–1671 (DQFTDYGGGGFHPSRNEVIINSEIWDMRTFKLLRSVPSL). 2 consecutive short sequence motifs (DWD box) follow at residues 1619–1626 (VLWDRRIP) and 1655–1662 (EIWDMRTF). A disordered region spans residues 1763–1883 (YEIGRRRPTD…DDYRDNIRSS (121 aa)). Composition is skewed to acidic residues over residues 1773 to 1796 (DDSDPDDDDETEDEDEDDEEEDDL) and 1808 to 1864 (DSGD…DGEM).

The protein belongs to the VPRBP/DCAF1 family. Component of the CUL4-RBX1-DDB1-DCAF1 E3 ubiquitin-protein ligase complex. Interacts with DDB1A through its DWD motifs. Ubiquitous but predominantly expressed in the inflorescence and roots.

The protein resides in the nucleus. The protein operates within protein modification; protein ubiquitination. Functionally, component of the CUL4-RBX1-DDB1-DCAF1 E3 ubiquitin-protein ligase complex, DCAF1 may function as the substrate recognition module within this complex. Appears to be required for plant embryogenesis and to affect several other developmental processes including leaf, shoot, and flower development. In Arabidopsis thaliana (Mouse-ear cress), this protein is DDB1- and CUL4-associated factor homolog 1 (DCAF1).